We begin with the raw amino-acid sequence, 366 residues long: RISC-loading complex subunit TARBP2 (366 aa).

3 sufficient for interaction with PRKRA regions span residues 22-105 (MLAA…EPAL), 152-234 (SPQQ…DARD), and 287-366 (LGAL…AGSK). A DRBM 1 domain is found at 30–97 (TPISLLQEYG…AEVALKHLKG (68 aa)). Ser152 bears the Phosphoserine mark. DRBM domains lie at 159-227 (NPVG…RVHT) and 293-361 (ACCR…YLKI). Residues 228-366 (VPLDARDGNE…QYLKIMAGSK (139 aa)) form a sufficient for interaction with DICER1 region.

The protein belongs to the TARBP2 family. In terms of assembly, self-associates. Component of the RISC loading complex (RLC), or micro-RNA (miRNA) loading complex (miRLC), which is composed of DICER1, AGO2 and TARBP2. Note that the trimeric RLC/miRLC is also referred to as RISC. Interacts with EIF2AK2/PKR and inhibits its protein kinase activity. Interacts with DHX9 and PRKRA. Interacts with DICER1, AGO2, MOV10, EIF6 and RPL7A (60S ribosome subunit); they form a large RNA-induced silencing complex (RISC). Interacts with IRF7; this interaction prevents IRF7 phosphorylation and activation. As to quaternary structure, (Microbial infection) Interacts with FTSJ3; forms a complex with FTSJ3 and HIV-1 TAR RNA. (Microbial infection) Interacts with ebolavirus VP30; this interaction, which occurs only in the presence of siRNA, prevents TARBP2 binding to DICER1 and thus allows the virus to counteract host RNA silencing. In terms of assembly, (Microbial infection) Interacts with ebolavirus VP35; this interaction prevents TARBP2 binding to DICER1 and thus allows the virus to counteract host RNA silencing.

The protein resides in the cytoplasm. It is found in the perinuclear region. The protein localises to the nucleus. In terms of biological role, required for formation of the RNA induced silencing complex (RISC). Component of the RISC loading complex (RLC), also known as the micro-RNA (miRNA) loading complex (miRLC), which is composed of DICER1, AGO2 and TARBP2. Within the RLC/miRLC, DICER1 and TARBP2 are required to process precursor miRNAs (pre-miRNAs) to mature miRNAs and then load them onto AGO2. AGO2 bound to the mature miRNA constitutes the minimal RISC and may subsequently dissociate from DICER1 and TARBP2. May also play a role in the production of short interfering RNAs (siRNAs) from double-stranded RNA (dsRNA) by DICER1. Binds in vitro to the PRM1 3'-UTR. Seems to act as a repressor of translation. For some pre-miRNA substrates, may also alter the choice of cleavage site by DICER1. Negatively regulates IRF7-mediated IFN-beta signaling triggered by viral infection by inhibiting the phosphorylation of IRF7 and promoting its 'Lys'-48-linked ubiquitination and degradation. (Microbial infection) Binds to the HIV-1 TAR RNA which is located in the long terminal repeat (LTR) of HIV-1, and stimulates translation of TAR-containing RNAs. This is achieved in part at least by binding to and inhibiting EIF2AK2/PKR, thereby reducing phosphorylation and inhibition of EIF2S1/eIF-2-alpha. May also promote translation of TAR-containing RNAs independently of EIF2AK2/PKR. Mediates recruitment of FTSJ3 methyltransferase to HIV-1 RNA, leading to 2'-O-methylation of the viral genome, allowing HIV-1 to escape the innate immune system. In Homo sapiens (Human), this protein is RISC-loading complex subunit TARBP2.